The chain runs to 211 residues: BAG family molecular chaperone regulator 2 (211 aa).

At alanine 2 the chain carries N-acetylalanine. Serine 20, serine 31, and serine 73 each carry phosphoserine. A coiled-coil region spans residues 20-61 (SMADRSSRLLESLDQLELRVEALREAATAVEQEKEVLLEMIH). The region spanning 109-189 (SLKHATRIID…NIENADKAIK (81 aa)) is the BAG domain.

Binds to the ATPase domain of HSP/HSC70 chaperones. May interact with NWD1. Interacts with HSPA1A (via NBD), HSPA1B (via NBD) and HSPA8. May interact with DNJC9; the interaction seems to be histone-dependent.

Functionally, co-chaperone for HSP70 and HSC70 chaperone proteins. Acts as a nucleotide-exchange factor (NEF) promoting the release of ADP from the HSP70 and HSC70 proteins thereby triggering client/substrate protein release. This chain is BAG family molecular chaperone regulator 2, found in Bos taurus (Bovine).